The sequence spans 288 residues: ATP synthase subunit a (288 aa).

The next 6 membrane-spanning stretches (helical) occupy residues 47 to 67, 104 to 124, 157 to 177, 199 to 219, 237 to 257, and 258 to 278; these read LDSM…FWMV, LIAP…LMDL, DPNI…FYSI, PIVQ…TLIA, LIFI…SVPW, and AIFH…LTIV.

This sequence belongs to the ATPase A chain family. F-type ATPases have 2 components, CF(1) - the catalytic core - and CF(0) - the membrane proton channel. CF(1) has five subunits: alpha(3), beta(3), gamma(1), delta(1), epsilon(1). CF(0) has three main subunits: a(1), b(2) and c(9-12). The alpha and beta chains form an alternating ring which encloses part of the gamma chain. CF(1) is attached to CF(0) by a central stalk formed by the gamma and epsilon chains, while a peripheral stalk is formed by the delta and b chains.

Its subcellular location is the cell inner membrane. Key component of the proton channel; it plays a direct role in the translocation of protons across the membrane. The protein is ATP synthase subunit a of Psychrobacter arcticus (strain DSM 17307 / VKM B-2377 / 273-4).